The following is a 158-amino-acid chain: UPF0225 protein Pput_1155 (158 aa).

Belongs to the UPF0225 family.

This chain is UPF0225 protein Pput_1155, found in Pseudomonas putida (strain ATCC 700007 / DSM 6899 / JCM 31910 / BCRC 17059 / LMG 24140 / F1).